Reading from the N-terminus, the 207-residue chain is Large ribosomal subunit protein uL4 (207 aa).

The segment at 50 to 75 (KTKTVSEVSGTTKKPFKQKGTGNARQ) is disordered.

Belongs to the universal ribosomal protein uL4 family. In terms of assembly, part of the 50S ribosomal subunit.

Functionally, one of the primary rRNA binding proteins, this protein initially binds near the 5'-end of the 23S rRNA. It is important during the early stages of 50S assembly. It makes multiple contacts with different domains of the 23S rRNA in the assembled 50S subunit and ribosome. In terms of biological role, forms part of the polypeptide exit tunnel. This is Large ribosomal subunit protein uL4 from Rickettsia felis (strain ATCC VR-1525 / URRWXCal2) (Rickettsia azadi).